Consider the following 249-residue polypeptide: Eukaryotic translation initiation factor 3 subunit K (249 aa).

The PCI domain maps to 46-222 (FDCYANLALL…VKVPTNKENE (177 aa)).

The protein belongs to the eIF-3 subunit K family. As to quaternary structure, component of the eukaryotic translation initiation factor 3 (eIF-3) complex.

Its subcellular location is the cytoplasm. Functionally, component of the eukaryotic translation initiation factor 3 (eIF-3) complex, which is involved in protein synthesis of a specialized repertoire of mRNAs and, together with other initiation factors, stimulates binding of mRNA and methionyl-tRNAi to the 40S ribosome. The eIF-3 complex specifically targets and initiates translation of a subset of mRNAs involved in cell proliferation. The protein is Eukaryotic translation initiation factor 3 subunit K of Aspergillus fumigatus (strain CBS 144.89 / FGSC A1163 / CEA10) (Neosartorya fumigata).